The primary structure comprises 247 residues: E3 ubiquitin ligase TRIM40 (247 aa).

The RING-type zinc finger occupies 12–55 (CPICLDPLKEAVSTDCRHLFCRMCLIRHMDKASVSGVLSCPVCR). The segment at 64–105 (GDNYICHTHQKRVCRFCESSRHLLCEECLQSPEHRAHTELSI) adopts a B box-type zinc-finger fold. The Zn(2+) site is built by cysteine 69, histidine 72, cysteine 91, and histidine 97. Residues 111 to 148 (HYKERLNRRSRKLRKDLGDLQRLKAQEEKMLQALQVDW) adopt a coiled-coil conformation.

It belongs to the TRIM/RBCC family. Interacts with NEDD8.

The enzyme catalyses S-ubiquitinyl-[E2 ubiquitin-conjugating enzyme]-L-cysteine + [acceptor protein]-L-lysine = [E2 ubiquitin-conjugating enzyme]-L-cysteine + N(6)-ubiquitinyl-[acceptor protein]-L-lysine.. Functionally, E3 ubiquitin-protein ligase that plays a role in the limitation of the innate immune response. Mediates inhibition of the RLR signaling pathway by ubiquitinating RIGI and IFIH1 receptors, leading to their proteasomal degradation. Also promotes the neddylation of IKBKG/NEMO, stabilizing NFKBIA, and thereby inhibiting of NF-kappa-B nuclear translocation and activation. The polypeptide is E3 ubiquitin ligase TRIM40 (Trim40) (Rattus norvegicus (Rat)).